The chain runs to 92 residues: FMRFamide-like neuropeptides 16 (92 aa).

An N-terminal signal peptide occupies residues 1 to 24 (MNFSGFEFSSIVAFFLLILQLSTA). Positions 25–55 (AVLPADYAYGVADEMSALPDSGSLFAEQRPS) are excised as a propeptide. Phenylalanine amide is present on residues phenylalanine 64, phenylalanine 74, and phenylalanine 84. The propeptide occupies 87 to 92 (SAPFEQ).

The protein belongs to the FARP (FMRFamide related peptide) family. As to expression, each flp gene is expressed in a distinct set of neurons.

Its subcellular location is the secreted. Its function is as follows. FMRFamides and FMRFamide-like peptides are neuropeptides. AQTFVRF-amide inhibits the activity of dissected pharyngeal myogenic muscle system. This chain is FMRFamide-like neuropeptides 16, found in Caenorhabditis elegans.